Consider the following 250-residue polypeptide: Probable transcriptional regulatory protein PERMA_0079 (250 aa).

This sequence belongs to the TACO1 family.

Its subcellular location is the cytoplasm. In Persephonella marina (strain DSM 14350 / EX-H1), this protein is Probable transcriptional regulatory protein PERMA_0079.